The chain runs to 469 residues: Interstitial collagenase (469 aa).

An N-terminal signal peptide occupies residues 1–18 (MLSLPLLLLLLWGMGSHS). Positions 19–99 (FPTVPSETRE…PRCGVPDVAE (81 aa)) are cleaved as a propeptide — activation peptide. Residues 90–97 (PRCGVPDV) carry the Cysteine switch motif. Position 92 (Cys-92) interacts with Zn(2+). Ca(2+) is bound by residues Asp-124 and Asp-158. Residues His-168 and Asp-170 each contribute to the Zn(2+) site. Ca(2+) contacts are provided by Asp-175, Gly-176, Gly-178, and Asn-180. A Zn(2+)-binding site is contributed by His-183. Arg-190, Gly-192, and Asp-194 together coordinate Ca(2+). His-196 serves as a coordination point for Zn(2+). The Ca(2+) site is built by Asp-198, Glu-199, and Glu-201. His-218 serves as a coordination point for Zn(2+). Glu-219 is a catalytic residue. The Zn(2+) site is built by His-222 and His-228. At Thr-274 the chain carries Phosphothreonine. Hemopexin repeat units follow at residues 275-324 (PEVC…WPQL), 325-371 (PNGL…FGFP), 374-422 (VKNI…FPGI), and 423-466 (GDKV…WFNC). The cysteines at positions 278 and 466 are disulfide-linked. Asp-285 and Gln-329 together coordinate Ca(2+). The residue at position 360 (Tyr-360) is a Phosphotyrosine; by PKDCC. Ca(2+)-binding residues include Asp-378 and Asp-427.

This sequence belongs to the peptidase M10A family. Ca(2+) serves as cofactor. It depends on Zn(2+) as a cofactor. Tyrosine phosphorylated in platelets by PKDCC/VLK.

Its subcellular location is the secreted. The protein resides in the extracellular space. It localises to the extracellular matrix. It carries out the reaction Cleavage of the triple helix of collagen at about three-quarters of the length of the molecule from the N-terminus, at 775-Gly-|-Ile-776 in the alpha1(I) chain. Cleaves synthetic substrates and alpha-macroglobulins at bonds where P1' is a hydrophobic residue.. Its activity is regulated as follows. Can be activated without removal of the activation peptide. Cleaves collagens of types I, II, and III at one site in the helical domain. Also cleaves collagens of types VII and X. This Equus caballus (Horse) protein is Interstitial collagenase (MMP1).